We begin with the raw amino-acid sequence, 984 residues long: Mineralocorticoid receptor (984 aa).

The segment at Met1–Ile602 is modulating. The segment covering Gln231–Asn243 has biased composition (polar residues). Disordered stretches follow at residues Gln231–Thr329 and Ser346–Ala369. Residues Ser250, Ser259, Ser283, Ser287, and Ser299 each carry the phosphoserine modification. Residues Ser259–Val291 are compositionally biased toward low complexity. Residues Thr292–Thr329 are compositionally biased toward polar residues. The span at Ser346–Ser355 shows a compositional bias: low complexity. Zn(2+) is bound by residues Cys603, Cys606, Cys620, Cys623, Cys639, Cys645, Cys655, and Cys658. 2 NR C4-type zinc fingers span residues Cys603–Cys623 and Cys639–Cys663. The segment at residues Cys603–Met668 is a DNA-binding region (nuclear receptor). The interval Asn669–Pro725 is hinge. The segment at Ile684 to Tyr710 is disordered. Positions Gln692 to Ser703 are enriched in pro residues. Positions Gln726–Ile964 constitute an NR LBD domain. 21-hydroxyprogesterone-binding residues include Asn770 and Gln776. Residues Asn770 and Gln776 each contribute to the aldosterone site. Asn770 and Gln776 together coordinate progesterone. An important for coactivator binding region spans residues Lys782–Lys785. Positions 817 and 945 each coordinate 21-hydroxyprogesterone. Aldosterone-binding residues include Arg817 and Thr945. The progesterone site is built by Arg817 and Thr945.

Belongs to the nuclear hormone receptor family. NR3 subfamily. Heteromultimeric cytoplasmic complex with HSP90, HSP70, and FKBP4, in the absence of ligand. After ligand binding, it translocates to the nucleus and binds to DNA as a homodimer and as a heterodimer with NR3C1. Binds the coactivator NCOA2. May interact with HSD11B2 in the absence of ligand. Binds the coactivators NCOA1, TIF1 and NRIP1. In terms of processing, phosphorylated.

Its subcellular location is the cytoplasm. It localises to the nucleus. It is found in the endoplasmic reticulum membrane. In terms of biological role, receptor for both mineralocorticoids (MC) such as aldosterone and glucocorticoids (GC) such as corticosterone or cortisol. Binds to mineralocorticoid response elements (MRE) and transactivates target genes. The effect of MC is to increase ion and water transport and thus raise extracellular fluid volume and blood pressure and lower potassium levels. The protein is Mineralocorticoid receptor (NR3C2) of Aotus nancymaae (Ma's night monkey).